Reading from the N-terminus, the 926-residue chain is Isoleucine--tRNA ligase (926 aa).

Positions 57-67 match the 'HIGH' region motif; the sequence is PYANGNIHMGH. Glu-555 serves as a coordination point for L-isoleucyl-5'-AMP. Positions 596 to 600 match the 'KMSKS' region motif; that stretch reads KMSKS. Lys-599 is an ATP binding site. Zn(2+)-binding residues include Cys-897, Cys-900, Cys-914, and Cys-917.

Belongs to the class-I aminoacyl-tRNA synthetase family. IleS type 1 subfamily. In terms of assembly, monomer. It depends on Zn(2+) as a cofactor.

It is found in the cytoplasm. The enzyme catalyses tRNA(Ile) + L-isoleucine + ATP = L-isoleucyl-tRNA(Ile) + AMP + diphosphate. In terms of biological role, catalyzes the attachment of isoleucine to tRNA(Ile). As IleRS can inadvertently accommodate and process structurally similar amino acids such as valine, to avoid such errors it has two additional distinct tRNA(Ile)-dependent editing activities. One activity is designated as 'pretransfer' editing and involves the hydrolysis of activated Val-AMP. The other activity is designated 'posttransfer' editing and involves deacylation of mischarged Val-tRNA(Ile). This chain is Isoleucine--tRNA ligase, found in Natranaerobius thermophilus (strain ATCC BAA-1301 / DSM 18059 / JW/NM-WN-LF).